We begin with the raw amino-acid sequence, 139 residues long: Coat protein TP2 (139 aa).

Its subcellular location is the virion. This is Coat protein TP2 from Thermoproteus tenax virus 1 (strain KRA1) (TTV1).